We begin with the raw amino-acid sequence, 86 residues long: Small ribosomal subunit protein uS17 (86 aa).

This sequence belongs to the universal ribosomal protein uS17 family. As to quaternary structure, part of the 30S ribosomal subunit.

Functionally, one of the primary rRNA binding proteins, it binds specifically to the 5'-end of 16S ribosomal RNA. The sequence is that of Small ribosomal subunit protein uS17 from Streptococcus pyogenes serotype M6 (strain ATCC BAA-946 / MGAS10394).